Reading from the N-terminus, the 357-residue chain is Aurora kinase A- and ninein-interacting protein (357 aa).

Residues 72 to 93 (TSQQGKTNGADQRSVSSHTESQ) are compositionally biased toward polar residues. A disordered region spans residues 72–102 (TSQQGKTNGADQRSVSSHTESQTNKESKEDA). The segment at 189-357 (QKEGEDSSCE…EGNQVIRHQA (169 aa)) is interaction with AURKA. The interval 281–357 (KDSWSQLFTE…EGNQVIRHQA (77 aa)) is interaction with RBBP8/CtIP. Phosphoserine is present on Ser292.

Belongs to the AUNIP family. As to quaternary structure, interacts (via C-terminus) with AURKA (via C-terminus). Interacts (via N-terminus) with NIN; this interaction blocks NIN phosphorylation by both AURKA and GSK3B. Identified in a complex with NIN and AURKA. Interacts with RBBP8/CtIP.

The protein resides in the nucleus. It localises to the chromosome. The protein localises to the cytoplasm. It is found in the cytoskeleton. Its subcellular location is the microtubule organizing center. The protein resides in the centrosome. It localises to the spindle pole. In terms of biological role, DNA-binding protein that accumulates at DNA double-strand breaks (DSBs) following DNA damage and promotes DNA resection and homologous recombination. Serves as a sensor of DNA damage: binds DNA with a strong preference for DNA substrates that mimic structures generated at stalled replication forks, and anchors RBBP8/CtIP to DSB sites to promote DNA end resection and ensuing homologous recombination repair. Inhibits non-homologous end joining (NHEJ). Required for the dynamic movement of AURKA at the centrosomes and spindle apparatus during the cell cycle. The protein is Aurora kinase A- and ninein-interacting protein of Bos taurus (Bovine).